Here is a 1390-residue protein sequence, read N- to C-terminus: DNA-directed RNA polymerase subunit beta (1390 aa).

Belongs to the RNA polymerase beta chain family. As to quaternary structure, the RNAP catalytic core consists of 2 alpha, 1 beta, 1 beta' and 1 omega subunit. When a sigma factor is associated with the core the holoenzyme is formed, which can initiate transcription.

The enzyme catalyses RNA(n) + a ribonucleoside 5'-triphosphate = RNA(n+1) + diphosphate. Its function is as follows. DNA-dependent RNA polymerase catalyzes the transcription of DNA into RNA using the four ribonucleoside triphosphates as substrates. This Chromobacterium violaceum (strain ATCC 12472 / DSM 30191 / JCM 1249 / CCUG 213 / NBRC 12614 / NCIMB 9131 / NCTC 9757 / MK) protein is DNA-directed RNA polymerase subunit beta.